The following is a 206-amino-acid chain: Adenylate kinase (206 aa).

10–15 (GAGKGT) provides a ligand contact to ATP. Residues 30–59 (STGDILREAVQKGTPLGKKAKEYMERGELV) are NMP. AMP-binding positions include T31, 57–59 (ELV), 82–85 (GFPR), and Q89. ATP is bound by residues R120, R124, and 133-134 (VY). Positions 123-153 (GRRINPETGEVYHVKYNPPPPGVKVIQREDD) are LID. R161 contributes to the AMP binding site. Residue K189 participates in ATP binding.

Belongs to the adenylate kinase family. In terms of assembly, monomer.

The protein localises to the cytoplasm. It carries out the reaction AMP + ATP = 2 ADP. Its pathway is purine metabolism; AMP biosynthesis via salvage pathway; AMP from ADP: step 1/1. Functionally, catalyzes the reversible transfer of the terminal phosphate group between ATP and AMP. Plays an important role in cellular energy homeostasis and in adenine nucleotide metabolism. This chain is Adenylate kinase, found in Aquifex aeolicus (strain VF5).